Here is a 160-residue protein sequence, read N- to C-terminus: S-protein homolog 13 (160 aa).

An N-terminal signal peptide occupies residues 1 to 27 (MGRDLGWCFFVATVLLAAVLLPAPTIA).

It belongs to the plant self-incompatibility (S1) protein family.

Its subcellular location is the secreted. This chain is S-protein homolog 13, found in Arabidopsis thaliana (Mouse-ear cress).